The chain runs to 207 residues: Dephospho-CoA kinase (207 aa).

The 200-residue stretch at 4–203 (VIGLTGGIAS…EEGYIEKPNY (200 aa)) folds into the DPCK domain. 12–17 (ASGKST) provides a ligand contact to ATP.

Belongs to the CoaE family.

It is found in the cytoplasm. The catalysed reaction is 3'-dephospho-CoA + ATP = ADP + CoA + H(+). It participates in cofactor biosynthesis; coenzyme A biosynthesis; CoA from (R)-pantothenate: step 5/5. In terms of biological role, catalyzes the phosphorylation of the 3'-hydroxyl group of dephosphocoenzyme A to form coenzyme A. This chain is Dephospho-CoA kinase, found in Staphylococcus aureus (strain bovine RF122 / ET3-1).